Consider the following 251-residue polypeptide: 5-oxoprolinase subunit A (251 aa).

The protein belongs to the LamB/PxpA family. Forms a complex composed of PxpA, PxpB and PxpC.

It carries out the reaction 5-oxo-L-proline + ATP + 2 H2O = L-glutamate + ADP + phosphate + H(+). Its function is as follows. Catalyzes the cleavage of 5-oxoproline to form L-glutamate coupled to the hydrolysis of ATP to ADP and inorganic phosphate. The polypeptide is 5-oxoprolinase subunit A (Vibrio campbellii (strain ATCC BAA-1116)).